Reading from the N-terminus, the 1216-residue chain is Metabotropic glycine receptor (1216 aa).

A signal peptide spans 1–23 (MGVMAYPFLFCLLLVHFGLGAIG). The Extracellular segment spans residues 24-417 (ASREAPSRPD…CFVQEDKYLR (394 aa)). The tract at residues 25 to 65 (SREAPSRPDPPRERTLRAKQHAQQPARASASDPSAPWSRST) is disordered. Basic and acidic residues predominate over residues 28–40 (APSRPDPPRERTL). Low complexity predominate over residues 46–64 (AQQPARASASDPSAPWSRS). Residues 85–281 (YLYTGDSHKL…CENGSYKPGW (197 aa)) are cache-like region. 2 N-linked (GlcNAc...) asparagine glycosylation sites follow: Asn98 and Asn143. Cys99 and Cys272 form a disulfide bridge. Residues Ser172 and Arg173 each contribute to the glycine site. The N-linked (GlcNAc...) asparagine glycan is linked to Asn215. A glycine-binding site is contributed by Glu271. A glycan (N-linked (GlcNAc...) asparagine) is linked at Asn274. Asp307 lines the glycine pocket. Asn333 carries N-linked (GlcNAc...) asparagine glycosylation. The chain crosses the membrane as a helical span at residues 418–439 (LAIISFQALCMLLDFLSMLVVY). Topologically, residues 440–451 (RFRKAKSIRASG) are cytoplasmic. Residues 452-474 (LILLETILFGSLLLYFPVVILYF) traverse the membrane as a helical segment. Topologically, residues 475-478 (EPST) are extracellular. A helical transmembrane segment spans residues 479-501 (FRCILLRWVRLLGFATVYGTVTL). The cysteines at positions 481 and 573 are disulfide-linked. Residues 502–525 (KLHRVLKVFLSRTAQRIPYMTGGR) lie on the Cytoplasmic side of the membrane. The chain crosses the membrane as a helical span at residues 526 to 547 (VMRMLAVILLVVFWFLVGWTSS). The Extracellular segment spans residues 548 to 576 (VCQNLERHISLIGQGRTSDHLIFSMCLVE). The chain crosses the membrane as a helical span at residues 577–597 (RWDYMTAAAEFLFLLWGVYLC). Residues 598–611 (YAVRTVPSAFHEPR) lie on the Cytoplasmic side of the membrane. A helical membrane pass occupies residues 612-633 (YMAVAVHNELIISAIFHTIRFV). The Extracellular segment spans residues 634–642 (LASRLQSDW). Residues 643–664 (MLMLYFAHTHLTVTVTIGLLLI) form a helical membrane-spanning segment. At 665-1216 (PKFSHSSNNP…NEEVRLARKV (552 aa)) the chain is on the cytoplasmic side. 3 positions are modified to phosphoserine: Ser694, Ser705, and Ser708. Disordered stretches follow at residues 757–875 (RITE…ESVP) and 911–1000 (KEKT…HMKD). Residues 769 to 781 (CSKEDKDGGEHGS) show a composition bias toward basic and acidic residues. Residue Lys774 forms a Glycyl lysine isopeptide (Lys-Gly) (interchain with G-Cter in ubiquitin) linkage. Residues 864-873 (EDSQAVSTES) show a composition bias toward polar residues. A Phosphoserine modification is found at Ser866. The segment covering 926–944 (VEERAKAQKALPRERETNR) has biased composition (basic and acidic residues). Composition is skewed to polar residues over residues 945–963 (KYSN…PNSS) and 980–991 (QRANPTTANSDL). Ser947 carries the post-translational modification Phosphoserine. Residues 1007–1011 (VCPWE) carry the VCPWE motif 1 motif. Positions 1038–1072 (ERNPTFSLKEKSHPKPKAADLCQQSNPKSVDKAEV) are disordered. Ser1066 carries the phosphoserine modification. A VCPWE motif 2 motif is present at residues 1072-1076 (VCPWE). A Phosphoserine modification is found at Ser1081. Residues 1128–1167 (SKVENENLNQLGEQEKKTSSSERNVPDSHNSSNNFQPPLM) form a disordered region. Residues 1140–1153 (EQEKKTSSSERNVP) show a composition bias toward basic and acidic residues. Positions 1154–1163 (DSHNSSNNFQ) are enriched in polar residues. Positions 1172–1176 (VCPWE) match the VCPWE motif 3 motif.

This sequence belongs to the G-protein coupled receptor 3 family. As to quaternary structure, homodimer. Associates with the RGS7-GNB5 complex, promoting its localization to the cell membrane and regulating its GTPase activator activity. Interacts (via VCPWE motifs) with GNAO1. Interacts with GPC4. Interacts with EGFLAM.

Its subcellular location is the cell membrane. It is found in the postsynaptic cell membrane. The protein localises to the presynaptic cell membrane. It localises to the nucleus. Metabotropic receptor for glycine that controls synapse formation and function in the brain. Acts as an atypical G-protein coupled receptor that recruits and regulates the RGS7-GNB5 complex instead of activating G proteins. In absence of glycine ligand, promotes the GTPase activator activity of RGS7, increasing the GTPase activity of G protein alpha subunits, thereby driving them into their inactive GDP-bound form. Glycine-binding changes the conformation of the intracellular surface, inhibiting the GTPase activator activity of the RGS7-GNB5 complex, promoting G protein alpha subunits into their active GTP-bound form and regulating cAMP levels. Also able to bind taurine, a compound closely related to glycine, but with a two-fold lower affinity. Glycine receptor-dependent regulation of cAMP controls key ion channels, kinases and neurotrophic factors involved in neuronal excitability and synaptic transmission. Plays a pivotal role in regulating mood and cognition via its ability to regulate neuronal excitability in L2/L3 pyramidal neurons of the prefrontal cortex. Also involved in spatial learning by regulating hippocampal CA1 neuronal excitability. Acts as a synaptic organizer in the hippocampus, required for proper mossy fiber-CA3 neurocircuitry establishment, structure and function: induces presynaptic differentiation in contacting axons via its interaction with GPC4. In addition to glycine, may also act as a receptor for osteocalcin (BGLAP) hormone: osteocalcin-binding initiates a signaling response that prevents neuronal apoptosis in the hippocampus and regulates the synthesis of neurotransmitters. The protein is Metabotropic glycine receptor (GPR158) of Bos taurus (Bovine).